Consider the following 148-residue polypeptide: CASP-like protein 1 (148 aa).

3 helical membrane passes run 31–51 (FIYF…TSLL), 74–94 (VLLL…GYIG), and 121–141 (IAAG…SFFT).

It belongs to the Casparian strip membrane proteins (CASP) family. As to quaternary structure, homodimer and heterodimers.

The protein localises to the cell membrane. This Panax ginseng (Korean ginseng) protein is CASP-like protein 1.